Consider the following 280-residue polypeptide: Energy-coupling factor transporter ATP-binding protein EcfA2 (280 aa).

In terms of domain architecture, ABC transporter spans 3 to 245 (INLQNVSYTY…VSLLEKKQLG (243 aa)). 40–47 (GHTGSGKS) serves as a coordination point for ATP.

It belongs to the ABC transporter superfamily. Energy-coupling factor EcfA family. In terms of assembly, forms a stable energy-coupling factor (ECF) transporter complex composed of 2 membrane-embedded substrate-binding proteins (S component), 2 ATP-binding proteins (A component) and 2 transmembrane proteins (T component).

The protein localises to the cell membrane. Functionally, ATP-binding (A) component of a common energy-coupling factor (ECF) ABC-transporter complex. Unlike classic ABC transporters this ECF transporter provides the energy necessary to transport a number of different substrates. The chain is Energy-coupling factor transporter ATP-binding protein EcfA2 from Streptococcus pyogenes serotype M28 (strain MGAS6180).